The primary structure comprises 246 residues: Orotidine 5'-phosphate decarboxylase (246 aa).

Residues D22, K44, 71–80 (DLKYHDIPHT), T130, R191, Q201, G221, and R222 contribute to the substrate site. K73 serves as the catalytic Proton donor.

Belongs to the OMP decarboxylase family. Type 1 subfamily. Homodimer.

The catalysed reaction is orotidine 5'-phosphate + H(+) = UMP + CO2. It functions in the pathway pyrimidine metabolism; UMP biosynthesis via de novo pathway; UMP from orotate: step 2/2. Functionally, catalyzes the decarboxylation of orotidine 5'-monophosphate (OMP) to uridine 5'-monophosphate (UMP). The protein is Orotidine 5'-phosphate decarboxylase of Neisseria meningitidis serogroup C (strain 053442).